The chain runs to 388 residues: Succinate--CoA ligase [ADP-forming] subunit beta (388 aa).

Residues 9-244 (KSLFAEYGLP…PSQDDAREAH (236 aa)) enclose the ATP-grasp domain. ATP is bound by residues Lys46, 53–55 (GRG), Glu99, Thr102, and Glu107. Mg(2+) contacts are provided by Asn199 and Asp213. Substrate is bound by residues Asn264 and 321–323 (GIV).

Belongs to the succinate/malate CoA ligase beta subunit family. Heterotetramer of two alpha and two beta subunits. It depends on Mg(2+) as a cofactor.

It catalyses the reaction succinate + ATP + CoA = succinyl-CoA + ADP + phosphate. The catalysed reaction is GTP + succinate + CoA = succinyl-CoA + GDP + phosphate. It functions in the pathway carbohydrate metabolism; tricarboxylic acid cycle; succinate from succinyl-CoA (ligase route): step 1/1. Its function is as follows. Succinyl-CoA synthetase functions in the citric acid cycle (TCA), coupling the hydrolysis of succinyl-CoA to the synthesis of either ATP or GTP and thus represents the only step of substrate-level phosphorylation in the TCA. The beta subunit provides nucleotide specificity of the enzyme and binds the substrate succinate, while the binding sites for coenzyme A and phosphate are found in the alpha subunit. The chain is Succinate--CoA ligase [ADP-forming] subunit beta from Shewanella sp. (strain ANA-3).